The primary structure comprises 501 residues: Aluminum-activated malate transporter 2 (501 aa).

Transmembrane regions (helical) follow at residues 22 to 42, 52 to 72, 78 to 98, 101 to 121, 130 to 150, and 166 to 186; these read VVHA…YYYQ, AMWA…ATLG, AVAT…ASLS, TVEP…STFV, RYDY…VSGF, and VIMG…VWAG. Positions 398–425 are disordered; sequence FKNKKKPSKSNSGSIGQAMPNKSHDDDD.

This sequence belongs to the aromatic acid exporter (TC 2.A.85) family.

Its subcellular location is the membrane. Its function is as follows. Malate transporter. The sequence is that of Aluminum-activated malate transporter 2 (ALMT2) from Arabidopsis thaliana (Mouse-ear cress).